Consider the following 152-residue polypeptide: MPLLLSGRKFRHDLEASGCLAINVPLEGGAETRLLRRLKAAGYKTQITSVRGLGDPEAFLLKLHGIRPPHLGHQNVGRNGALGEVQQVIPQVNELLAGEKSVVLWLLEGQVLSRSEILSLCDLCDKEPRLKIVIEMGGARALRWQSMRSFIQ.

This sequence belongs to the complex I NdhN subunit family. NDH-1 can be composed of about 15 different subunits; different subcomplexes with different compositions have been identified which probably have different functions.

It is found in the cellular thylakoid membrane. It carries out the reaction a plastoquinone + NADH + (n+1) H(+)(in) = a plastoquinol + NAD(+) + n H(+)(out). The enzyme catalyses a plastoquinone + NADPH + (n+1) H(+)(in) = a plastoquinol + NADP(+) + n H(+)(out). In terms of biological role, NDH-1 shuttles electrons from an unknown electron donor, via FMN and iron-sulfur (Fe-S) centers, to quinones in the respiratory and/or the photosynthetic chain. The immediate electron acceptor for the enzyme in this species is believed to be plastoquinone. Couples the redox reaction to proton translocation, and thus conserves the redox energy in a proton gradient. Cyanobacterial NDH-1 also plays a role in inorganic carbon-concentration. This chain is NAD(P)H-quinone oxidoreductase subunit N, found in Prochlorococcus marinus (strain SARG / CCMP1375 / SS120).